The primary structure comprises 187 residues: Probable chorismate pyruvate-lyase (187 aa).

Arg81, Leu119, and Glu178 together coordinate substrate.

This sequence belongs to the UbiC family.

It is found in the cytoplasm. It catalyses the reaction chorismate = 4-hydroxybenzoate + pyruvate. It functions in the pathway cofactor biosynthesis; ubiquinone biosynthesis. Functionally, removes the pyruvyl group from chorismate, with concomitant aromatization of the ring, to provide 4-hydroxybenzoate (4HB) for the ubiquinone pathway. The protein is Probable chorismate pyruvate-lyase of Thiobacillus denitrificans (strain ATCC 25259 / T1).